Consider the following 798-residue polypeptide: MYSLILRERSGSITGSLWNRISSRNMGGGPRTFPGGLNKWQWKRMHEKKAREKENKLLDQEKQLYEARIRTEIRAKMWGNPDSGEKTAKSKQSHGPMSPKEHIKTLADRFMKAGAEDFWNENDGPVKKSDQGSRSGSDSIDSTSNSPIDVRRLVSATCDSMGKNRVFGSSRRGFSSMSRFKRNESSCDEGDDFDAKKLDTLSPFSPKFAGTKEKVKSSRSVVGVIRNKGLFGRRKFRKNDSSTEEDSDEEGDEGKMIGWMDMRKTGSSASLGNHDIKLTKRVNRNVTDEELYPPLDINTVREDLSKRKSVDNVMEEKQEPHDSIYSAKRFDESCISPLTLKALSASGILKMTRVQDATLSECLDGKDALVKAKTGTGKSMAFLLPAIETVLKAMNSGKGVNKVAPIFALILCPTRELASQIAAEGKALLKFHDGIGVQTLIGGTRFKLDQQRLESEPCQILIATPGRLLDHIENKSGLTSRLMALKLFIVDEADLLLDLGFRRDVEKIIDCLPRQRQSLLFSATIPKEVRRVSQLVLKRDHSYIDTIGLGCVETHDKVRQSCIVAPHESHFHLVPHLLKEHINNTPDYKIIVFCSTGMVTSLMYTLLREMKLNVREIHARKPQLHRTRVSDEFKESNRLILVTSDVSARGMNYPDVTLVIQVGIPSDREQYIHRLGRTGREGKGGEGLLLIAPWERYFLDELKDLPLEPIPAPDLDSIVKHQVDQSMAKIDTSIKEAAYHAWLGYYNSVRETGRDKTTLAELANRFCHSIGLEKPPALFRRTAVKMGLKGISGIPIRK.

Disordered regions lie at residues 76–100, 117–148, and 236–257; these read KMWG…MSPK, DFWN…NSPI, and FRKN…GKMI. Positions 132–148 are enriched in low complexity; the sequence is GSRSGSDSIDSTSNSPI. Residues 242 to 252 show a composition bias toward acidic residues; it reads STEEDSDEEGD. Residues 328–356 carry the Q motif motif; that stretch reads KRFDESCISPLTLKALSASGILKMTRVQD. In terms of domain architecture, Helicase ATP-binding spans 359–543; the sequence is LSECLDGKDA…QLVLKRDHSY (185 aa). 372-379 provides a ligand contact to ATP; the sequence is AKTGTGKS. The DEAD box motif lies at 491 to 494; sequence DEAD. The 150-residue stretch at 577-726 folds into the Helicase C-terminal domain; it reads LLKEHINNTP…SIVKHQVDQS (150 aa).

This sequence belongs to the DEAD box helicase family.

It catalyses the reaction ATP + H2O = ADP + phosphate + H(+). The sequence is that of Probable DEAD-box ATP-dependent RNA helicase 48 (RH48) from Arabidopsis thaliana (Mouse-ear cress).